The sequence spans 272 residues: MKGILGRKVGMTQLFTNEGILIPVTIVEVKPNVVTKVLTVEKDGYSATQLATEDKKASQIRRPEINKFKQANTTPKRFVKEIRNMTGYSLGDTIDASLFQAGEIVDVTAISKGKGFAGTIKRWNQHIGPKSHGGGGGSQPLRQTGSIGDISGNRVWKGMTMPGHLGSEQVTIQNLEIVKEDPANNMLVIKGSIPGAKGALVVIKKAIKTSHKKEAVQLLNLKEALAKNELFEQAKKYNVELNMQMSIKEMQTLLDEAIKKAEEQKQPEGENK.

A disordered region spans residues 125-146 (QHIGPKSHGGGGGSQPLRQTGS).

Belongs to the universal ribosomal protein uL3 family. As to quaternary structure, part of the 50S ribosomal subunit. Forms a cluster with proteins L14 and L19.

Its function is as follows. One of the primary rRNA binding proteins, it binds directly near the 3'-end of the 23S rRNA, where it nucleates assembly of the 50S subunit. The protein is Large ribosomal subunit protein uL3 of Metamycoplasma arthritidis (strain 158L3-1) (Mycoplasma arthritidis).